The chain runs to 229 residues: NAD-dependent protein deacylase (229 aa).

The region spanning 1–227 is the Deacetylase sirtuin-type domain; the sequence is MKNLVILSGA…QDLMPKLIEM (227 aa). 9 to 28 lines the NAD(+) pocket; that stretch reads GAGISAESGIKTFRDADGLW. Substrate is bound by residues tyrosine 53 and arginine 56. 86–89 is an NAD(+) binding site; the sequence is QNVD. Residue histidine 104 is the Proton acceptor of the active site. Residue 169–171 participates in NAD(+) binding; it reads GTS.

This sequence belongs to the sirtuin family. Class III subfamily.

Its subcellular location is the cytoplasm. It catalyses the reaction N(6)-acetyl-L-lysyl-[protein] + NAD(+) + H2O = 2''-O-acetyl-ADP-D-ribose + nicotinamide + L-lysyl-[protein]. The enzyme catalyses N(6)-succinyl-L-lysyl-[protein] + NAD(+) + H2O = 2''-O-succinyl-ADP-D-ribose + nicotinamide + L-lysyl-[protein]. NAD-dependent lysine deacetylase and desuccinylase that specifically removes acetyl and succinyl groups on target proteins. Modulates the activities of several proteins which are inactive in their acylated form. The protein is NAD-dependent protein deacylase of Helicobacter pylori (strain ATCC 700392 / 26695) (Campylobacter pylori).